Reading from the N-terminus, the 502-residue chain is DEP domain-containing protein 7 (502 aa).

The 91-residue stretch at 37-127 (LQTQVEVKKR…SSCSLYRFTT (91 aa)) folds into the DEP domain.

It belongs to the DEPDC7 family.

This Macaca fascicularis (Crab-eating macaque) protein is DEP domain-containing protein 7 (DEPDC7).